Consider the following 290-residue polypeptide: Arylamine N-acetyltransferase 1 (290 aa).

The residue at position 1 (M1) is an N-acetylmethionine. The active-site Acyl-thioester intermediate is C68. Residues T103 and G104 each coordinate CoA. Position 106–107 (106–107 (IH)) interacts with substrate. Residues H107 and D122 contribute to the active site. Residues Y208 and S214 each coordinate CoA.

The protein belongs to the arylamine N-acetyltransferase family.

The protein localises to the cytoplasm. It catalyses the reaction an arylamine + acetyl-CoA = an N-acetylarylamine + CoA. Participates in the detoxification of a plethora of hydrazine and arylamine drugs. Catalyzes the N- or O-acetylation of various arylamine and heterocyclic amine substrates and is able to bioactivate several known carcinogens. In Homo sapiens (Human), this protein is Arylamine N-acetyltransferase 1 (NAT1).